The sequence spans 407 residues: MQKTSNTLALGSLTALFFLMGFITVLNDILIPHLKPIFDLTYFEASLIQFCFFGAYFIMGGVFGNVISKIGYPFGVVLGFVITATGCALFYPAAHFGSYGFFLGALFILASGIVCLQTAGNPFVTLLSKGKEARNLVLVQAFNSLGTTLGPIFGSLLIFSTTKMGDNASLIDKLADAKSVQMPYLGLAVFSLLLALIMYLLKLPDVEKEMPKETTQKSLFSHKHFVFGALGIFFYVGGEVAIGSFLVLSFEKLLNLDSQSSAHYLVYYWGGAMVGRFLGSVLMNKIAPNKYLAFNALSSIVLIALAIIIGGKIALFALTFVGFFNSIMFPTIFSLATLNLGHLTSKASGVISMAIVGGALIPPIQGAVTDMLTATESNLLYAYGVPLLCYFYILFFALKGYKQEENS.

12 consecutive transmembrane segments (helical) span residues 11 to 31 (GSLT…DILI), 47 to 67 (LIQF…GNVI), 70 to 90 (IGYP…CALF), 96 to 116 (FGSY…IVCL), 139 to 159 (VQAF…LLIF), 180 to 200 (VQMP…IMYL), 225 to 245 (FVFG…IGSF), 263 to 283 (HYLV…SVLM), 300 to 320 (IVLI…ALTF), 321 to 341 (VGFF…LNLG), 349 to 369 (GVIS…GAVT), and 378 to 398 (NLLY…FFAL).

The protein belongs to the major facilitator superfamily. FHS transporter (TC 2.A.1.7) family.

It is found in the cell inner membrane. Its function is as follows. Intake of glucose and galactose. The protein is Putative glucose/galactose transporter (gluP) of Helicobacter pylori (strain ATCC 700392 / 26695) (Campylobacter pylori).